Here is a 492-residue protein sequence, read N- to C-terminus: Regulatory protein ViaA (492 aa).

The protein belongs to the ViaA family. As to quaternary structure, homodimer. Interacts with RavA.

It localises to the cytoplasm. Its function is as follows. Component of the RavA-ViaA chaperone complex, which may act on the membrane to optimize the function of some of the respiratory chains. ViaA stimulates the ATPase activity of RavA. This chain is Regulatory protein ViaA, found in Pectobacterium atrosepticum (strain SCRI 1043 / ATCC BAA-672) (Erwinia carotovora subsp. atroseptica).